Consider the following 240-residue polypeptide: Uridylate kinase (240 aa).

ATP is bound at residue 13 to 16; that stretch reads KASG. Positions 21–26 are involved in allosteric activation by GTP; sequence GSQGFG. Gly55 is a UMP binding site. Gly56 and Arg60 together coordinate ATP. UMP is bound by residues Asp75 and 136-143; that span reads TGNPFFTT. 4 residues coordinate ATP: Thr163, Gln164, Tyr169, and Asp172.

This sequence belongs to the UMP kinase family. In terms of assembly, homohexamer.

It is found in the cytoplasm. It catalyses the reaction UMP + ATP = UDP + ADP. The protein operates within pyrimidine metabolism; CTP biosynthesis via de novo pathway; UDP from UMP (UMPK route): step 1/1. Allosterically activated by GTP. Inhibited by UTP. Its function is as follows. Catalyzes the reversible phosphorylation of UMP to UDP. The protein is Uridylate kinase of Brucella abortus biovar 1 (strain 9-941).